The chain runs to 67 residues: MKKDIHPDYKVCTVTCACGNSFETKSNVETLKIDICSSCHPFFTGEQKLVDAAGRVEKFKAKYNMAK.

Zn(2+) contacts are provided by Cys-16, Cys-18, Cys-36, and Cys-39.

This sequence belongs to the bacterial ribosomal protein bL31 family. Type A subfamily. Part of the 50S ribosomal subunit. The cofactor is Zn(2+).

Functionally, binds the 23S rRNA. The polypeptide is Large ribosomal subunit protein bL31 (Aliarcobacter butzleri (strain RM4018) (Arcobacter butzleri)).